Here is a 261-residue protein sequence, read N- to C-terminus: UPF0246 protein PMI0005 (261 aa).

Belongs to the UPF0246 family.

The protein is UPF0246 protein PMI0005 of Proteus mirabilis (strain HI4320).